Here is a 795-residue protein sequence, read N- to C-terminus: Protein espinas (795 aa).

The tract at residues 30–96 (GTGLTFPPHR…FVSPLQRRHC (67 aa)) is disordered. Residues 52 to 66 (ASMSSNVASTATSSN) are compositionally biased toward low complexity. Positions 135–243 (LDFQRNSQSD…AVRLLSDERP (109 aa)) constitute a PET domain. 3 consecutive LIM zinc-binding domains span residues 242 to 306 (RPCK…ETQK), 307 to 367 (PRCS…MFAE), and 368 to 430 (YCDY…GEPP). Disordered stretches follow at residues 427–487 (GEPP…GSAG) and 616–684 (NRNT…EMQI). 2 stretches are compositionally biased toward basic and acidic residues: residues 459–471 (RSGD…ESSR) and 637–649 (LDNR…RFHS). The span at 650 to 662 (VQDTMSRSKSYTD) shows a compositional bias: polar residues. Positions 666-675 (ARRRRRRRNQ) are enriched in basic residues.

This sequence belongs to the prickle / espinas / testin family.

The chain is Protein espinas from Drosophila pseudoobscura pseudoobscura (Fruit fly).